A 201-amino-acid polypeptide reads, in one-letter code: MGNASENFDIEDLMSYGDDLINLLNVKNGFDIISQSSEQFKALNFACHEDFNQIQGSIEDCKTKLYACKKKTEEAYSDIAAEDEIERLQKELDEEMEREFKLKDELRLVADELKDLNAQLSSIDEHKQSTKRKVRDDLRAEKKLSMYASVTNVIPDIDDPSKISGYMVDREKRLIEKFQFETNKMTAYETCNSIWSIINKQ.

A coiled-coil region spans residues D78–K133.

This sequence belongs to the SPC24 family. In terms of assembly, component of the NDC80 complex, which consists of NDC80, NUF2, SPC24 and SPC25. In terms of tissue distribution, highly expressed in actively dividing tissues, such as shoot apical meristem (SAM), root apical meristem (RAM), vasculature, newly emerging leaves and inflorescence shoots.

The protein resides in the chromosome. It is found in the centromere. Its function is as follows. Acts as a component of the essential kinetochore-associated NDC80 complex, which is required for chromosome segregation and spindle checkpoint activity to ensure proper cell division. Required for the maintenance of plant architecture. In Arabidopsis thaliana (Mouse-ear cress), this protein is Kinetochore protein SPC24 homolog.